The chain runs to 229 residues: MAKKKAFTPLFYLASIVFLPWWISFSVNKCLESWVTNWWNTGQSEIFLNNIQEKSLLEKFIELEELLFLDEMIKEYSETHLEEFGIGIHKETIQLIKIQNENRIHTILHFSTNIICFIILSGYSILGNEKLVILNSWAQEFLYNLSDTVKAFSILLLTDLCIGFHSPHGWELMIGSIYKDFGFVHNDQIISGLVSTFPVILDTIFKYWIFRYLNRLSPSLVVIYHSMND.

Transmembrane regions (helical) follow at residues 7-27 (FTPLFYLASIVFLPWWISFSV), 107-127 (ILHFSTNIICFIILSGYSILG), and 189-209 (IISGLVSTFPVILDTIFKYWI).

This sequence belongs to the CemA family.

The protein localises to the plastid. The protein resides in the chloroplast inner membrane. The enzyme catalyses K(+)(in) + H(+)(out) = K(+)(out) + H(+)(in). In terms of biological role, contributes to K(+)/H(+) antiport activity by supporting proton efflux to control proton extrusion and homeostasis in chloroplasts in a light-dependent manner to modulate photosynthesis. Prevents excessive induction of non-photochemical quenching (NPQ) under continuous-light conditions. Indirectly promotes efficient inorganic carbon uptake into chloroplasts. This is Potassium/proton antiporter CemA from Nicotiana sylvestris (Wood tobacco).